A 903-amino-acid polypeptide reads, in one-letter code: Chitin synthase 1 (903 aa).

A disordered region spans residues 1-154 (MDPRYGAQPQ…YQDQPQQGGG (154 aa)). Positions 67 to 79 (DHLNLNAAQSVDN) are enriched in polar residues. The N-linked (GlcNAc...) asparagine glycan is linked to Asn-79. The span at 100–117 (YYNQPYEPRPQQQPYDQG) shows a compositional bias: low complexity. Polar residues predominate over residues 135–150 (HQPSDAPSEPYQDQPQ). A run of 9 helical transmembrane segments spans residues 444-464 (SAFG…YVAL), 543-563 (RWLN…LDFL), 573-593 (FAFF…WFAI), 619-639 (ILGV…FVLS), 654-674 (MCWF…FIAV), 700-720 (MLII…LIML), 729-749 (LVQY…YAFC), 828-848 (GVVL…LSSA), and 875-895 (IVLW…MWFL).

Belongs to the chitin synthase family. Class I subfamily.

It localises to the cell membrane. The enzyme catalyses [(1-&gt;4)-N-acetyl-beta-D-glucosaminyl](n) + UDP-N-acetyl-alpha-D-glucosamine = [(1-&gt;4)-N-acetyl-beta-D-glucosaminyl](n+1) + UDP + H(+). Functionally, polymerizes chitin, a structural polymer of the cell wall and septum, by transferring the sugar moiety of UDP-GlcNAc to the non-reducing end of the growing chitin polymer. Plays an important role in nuclear sorting or distribution. The polypeptide is Chitin synthase 1 (Fusarium oxysporum f. sp. lycopersici (strain 4287 / CBS 123668 / FGSC 9935 / NRRL 34936) (Fusarium vascular wilt of tomato)).